The following is a 440-amino-acid chain: uncharacterized protein (440 aa).

A signal peptide spans 1–19 (MKKLLLAASIVYFASACLA).

This is an uncharacterized protein from Rickettsia prowazekii (strain Madrid E).